The chain runs to 250 residues: ATP synthase subunit b 2 (250 aa).

A helical transmembrane segment spans residues 2–22 (LIDWFTVFAQILNFVILLGLL).

This sequence belongs to the ATPase B chain family. In terms of assembly, F-type ATPases have 2 components, F(1) - the catalytic core - and F(0) - the membrane proton channel. F(1) has five subunits: alpha(3), beta(3), gamma(1), delta(1), epsilon(1). F(0) has four main subunits: a(1), b(1), b'(1) and c(10-14). The alpha and beta chains form an alternating ring which encloses part of the gamma chain. F(1) is attached to F(0) by a central stalk formed by the gamma and epsilon chains, while a peripheral stalk is formed by the delta, b and b' chains.

Its subcellular location is the cellular thylakoid membrane. F(1)F(0) ATP synthase produces ATP from ADP in the presence of a proton or sodium gradient. F-type ATPases consist of two structural domains, F(1) containing the extramembraneous catalytic core and F(0) containing the membrane proton channel, linked together by a central stalk and a peripheral stalk. During catalysis, ATP synthesis in the catalytic domain of F(1) is coupled via a rotary mechanism of the central stalk subunits to proton translocation. In terms of biological role, component of the F(0) channel, it forms part of the peripheral stalk, linking F(1) to F(0). This is ATP synthase subunit b 2 from Picosynechococcus sp. (strain ATCC 27264 / PCC 7002 / PR-6) (Agmenellum quadruplicatum).